Here is a 516-residue protein sequence, read N- to C-terminus: GMP synthase [glutamine-hydrolyzing] (516 aa).

Residues 7–199 (KIIILDFGSQ…VFGLCKCQAT (193 aa)) form the Glutamine amidotransferase type-1 domain. The active-site Nucleophile is the Cys-84. Active-site residues include His-173 and Glu-175. Residues 200 to 391 (WTMQGFIESN…LGLPDEAVHR (192 aa)) enclose the GMPS ATP-PPase domain. 227 to 233 (SGGVDSS) contributes to the ATP binding site.

As to quaternary structure, homodimer.

It catalyses the reaction XMP + L-glutamine + ATP + H2O = GMP + L-glutamate + AMP + diphosphate + 2 H(+). It participates in purine metabolism; GMP biosynthesis; GMP from XMP (L-Gln route): step 1/1. Catalyzes the synthesis of GMP from XMP. In Desulfotalea psychrophila (strain LSv54 / DSM 12343), this protein is GMP synthase [glutamine-hydrolyzing].